The primary structure comprises 188 residues: Elongation factor P (188 aa).

This sequence belongs to the elongation factor P family.

The protein resides in the cytoplasm. The protein operates within protein biosynthesis; polypeptide chain elongation. Its function is as follows. Involved in peptide bond synthesis. Stimulates efficient translation and peptide-bond synthesis on native or reconstituted 70S ribosomes in vitro. Probably functions indirectly by altering the affinity of the ribosome for aminoacyl-tRNA, thus increasing their reactivity as acceptors for peptidyl transferase. This Phytoplasma mali (strain AT) protein is Elongation factor P.